The primary structure comprises 356 residues: Photosynthetic reaction center cytochrome c subunit (356 aa).

The N-terminal stretch at 1–20 (MKQLIVNSVATVALASLVAG) is a signal peptide. Residue Cys-21 is the site of S-diacylglycerol cysteine attachment. Heme is bound by residues Met-94, Cys-107, Cys-110, His-111, Met-130, His-144, Cys-152, Cys-155, His-156, Met-253, Cys-264, Cys-267, His-268, Cys-325, Cys-328, and His-329.

Component of the photosynthetic reaction center composed of protein subunits L (PufL), M (PufM), H (PuhA) and cytochrome C (PufC). Binds 4 heme groups per subunit. Post-translationally, after the signal sequence is removed, the N-terminal cysteine is modified to form a diacylglyceride thioether, but the alpha-amino group is free and is not N-palmitoylated.

It is found in the cellular chromatophore membrane. In terms of biological role, the reaction center of purple bacteria contains a tightly bound cytochrome molecule which re-reduces the photo oxidized primary electron donor. In Blastochloris viridis (Rhodopseudomonas viridis), this protein is Photosynthetic reaction center cytochrome c subunit.